We begin with the raw amino-acid sequence, 408 residues long: Probable pectate lyase 18 (408 aa).

The N-terminal stretch at 1 to 24 is a signal peptide; that stretch reads MKMQTKKLFITIVSFLLYAPLFLS. An N-linked (GlcNAc...) asparagine glycan is attached at N42. The Ca(2+) site is built by D206, D230, and D234. Residue R286 is part of the active site.

The protein belongs to the polysaccharide lyase 1 family. It depends on Ca(2+) as a cofactor. Expressed in flowers, but not in leaves.

The catalysed reaction is Eliminative cleavage of (1-&gt;4)-alpha-D-galacturonan to give oligosaccharides with 4-deoxy-alpha-D-galact-4-enuronosyl groups at their non-reducing ends.. It participates in glycan metabolism; pectin degradation; 2-dehydro-3-deoxy-D-gluconate from pectin: step 2/5. The sequence is that of Probable pectate lyase 18 from Arabidopsis thaliana (Mouse-ear cress).